The primary structure comprises 104 residues: Chromogranin-A (104 aa).

Cysteines 17 and 38 form a disulfide.

It belongs to the chromogranin/secretogranin protein family. In terms of assembly, dimer.

The protein resides in the cytoplasmic vesicle. Its subcellular location is the secretory vesicle. It localises to the secreted. Functionally, chromogranin A probably has a paracrine role in the regulation of secretion or maturation. In Struthio camelus (Common ostrich), this protein is Chromogranin-A (CHGA).